We begin with the raw amino-acid sequence, 359 residues long: Histidinol-phosphate aminotransferase (359 aa).

N6-(pyridoxal phosphate)lysine is present on Lys217.

The protein belongs to the class-II pyridoxal-phosphate-dependent aminotransferase family. Histidinol-phosphate aminotransferase subfamily. As to quaternary structure, homodimer. Pyridoxal 5'-phosphate serves as cofactor.

The catalysed reaction is L-histidinol phosphate + 2-oxoglutarate = 3-(imidazol-4-yl)-2-oxopropyl phosphate + L-glutamate. The protein operates within amino-acid biosynthesis; L-histidine biosynthesis; L-histidine from 5-phospho-alpha-D-ribose 1-diphosphate: step 7/9. The protein is Histidinol-phosphate aminotransferase of Salmonella arizonae (strain ATCC BAA-731 / CDC346-86 / RSK2980).